We begin with the raw amino-acid sequence, 224 residues long: Phosphoglycolate phosphatase (224 aa).

Aspartate 11 serves as the catalytic Nucleophile. 3 residues coordinate Mg(2+): aspartate 11, aspartate 13, and aspartate 177.

This sequence belongs to the HAD-like hydrolase superfamily. CbbY/CbbZ/Gph/YieH family. Requires Mg(2+) as cofactor.

It catalyses the reaction 2-phosphoglycolate + H2O = glycolate + phosphate. The protein operates within organic acid metabolism; glycolate biosynthesis; glycolate from 2-phosphoglycolate: step 1/1. Specifically catalyzes the dephosphorylation of 2-phosphoglycolate. Is involved in the dissimilation of the intracellular 2-phosphoglycolate formed during the DNA repair of 3'-phosphoglycolate ends, a major class of DNA lesions induced by oxidative stress. The protein is Phosphoglycolate phosphatase of Haemophilus influenzae (strain 86-028NP).